The primary structure comprises 456 residues: uncharacterized protein (456 aa).

The TRAM domain occupies Thr-3–Glu-61. The [4Fe-4S] cluster site is built by Cys-74, Cys-80, Cys-83, and Cys-162. Residues Gln-286, Tyr-315, Glu-336, and Asp-384 each contribute to the S-adenosyl-L-methionine site. Cys-411 functions as the Nucleophile in the catalytic mechanism.

It belongs to the class I-like SAM-binding methyltransferase superfamily. RNA M5U methyltransferase family.

This is an uncharacterized protein from Staphylococcus epidermidis (strain ATCC 35984 / DSM 28319 / BCRC 17069 / CCUG 31568 / BM 3577 / RP62A).